We begin with the raw amino-acid sequence, 70 residues long: Conotoxin ArMKLT2-0111 (70 aa).

The signal sequence occupies residues 1–22; it reads MKLTCVLIIAVLFLTACQLTTG. Positions 23 to 40 are excised as a propeptide; it reads EQKDHALRSTDKNSKLTR. Position 41 is a pyrrolidone carboxylic acid (Gln41). 3 disulfides stabilise this stretch: Cys42/Cys56, Cys49/Cys60, and Cys55/Cys67.

It belongs to the conotoxin O1 superfamily. As to expression, expressed by the venom duct.

The protein resides in the secreted. The protein is Conotoxin ArMKLT2-0111 of Conus arenatus (Sand-dusted cone).